Consider the following 360-residue polypeptide: MRTLNVALGDRSYPIHIGAGLLARPELIVPLLRTPRVAIVTNTVVGPLYLERLTAGLESHGIAVSTVVLPDGEAHKDWTTLNRIFDMLLESRCERSTTLLALGGGVVGDMGGFAAATYQRGMPFMQIPTTLLSQVDSSVGGKTAINHPLGKNMIGAFYQPRLVLADIEVLNTLPDRELSAGLAEVIKYGLIRDPAFYAWLEENIERLRARDPEALAYAIERSCRNKAEVVAADETEQGERALLNLGHTFGHAIETGMGYGEWLHGEAVAAGTMMAAELSRALGWLTDDDVNRIEALFVRAGLPVRAPALGIERYLELMAHDKKVESGRLRLVLLASIGKALMFGDATAGEIGAAISRRCG.

Residues 71–76, 105–109, 129–130, Lys142, and Lys151 each bind NAD(+); these read DGEAHK, GVVGD, and TT. Zn(2+) contacts are provided by Glu184, His247, and His264.

The protein belongs to the sugar phosphate cyclases superfamily. Dehydroquinate synthase family. Co(2+) is required as a cofactor. Requires Zn(2+) as cofactor. NAD(+) serves as cofactor.

It localises to the cytoplasm. The catalysed reaction is 7-phospho-2-dehydro-3-deoxy-D-arabino-heptonate = 3-dehydroquinate + phosphate. It participates in metabolic intermediate biosynthesis; chorismate biosynthesis; chorismate from D-erythrose 4-phosphate and phosphoenolpyruvate: step 2/7. Its function is as follows. Catalyzes the conversion of 3-deoxy-D-arabino-heptulosonate 7-phosphate (DAHP) to dehydroquinate (DHQ). In Azoarcus sp. (strain BH72), this protein is 3-dehydroquinate synthase.